The primary structure comprises 394 residues: Elongation factor Tu (394 aa).

Positions K10–E204 constitute a tr-type G domain. The tract at residues G19–T26 is G1. GTP is bound at residue G19–T26. Residue T26 coordinates Mg(2+). The tract at residues G60–N64 is G2. The interval D81–G84 is G3. Residues D81–H85 and N136–D139 each bind GTP. A G4 region spans residues N136 to D139. The tract at residues S174–L176 is G5.

This sequence belongs to the TRAFAC class translation factor GTPase superfamily. Classic translation factor GTPase family. EF-Tu/EF-1A subfamily. Monomer.

Its subcellular location is the cytoplasm. It carries out the reaction GTP + H2O = GDP + phosphate + H(+). Functionally, GTP hydrolase that promotes the GTP-dependent binding of aminoacyl-tRNA to the A-site of ribosomes during protein biosynthesis. In Aeromonas hydrophila subsp. hydrophila (strain ATCC 7966 / DSM 30187 / BCRC 13018 / CCUG 14551 / JCM 1027 / KCTC 2358 / NCIMB 9240 / NCTC 8049), this protein is Elongation factor Tu.